Reading from the N-terminus, the 507-residue chain is MVTIRADEISNIIRERIEQYNREVKIVNTGTVLQVGDGIARIHGLDEVMAGELVEFEEGTIGIALNLESNNVGVVLMGDGLTIQEGSSVKATGRIAQIPVSEAYLGRVINALAKPIDGRGEISASESRLIESPAPGIISRRSVYEPLQTGLIAIDSMIPIGRGQRELIIGDRQTGKAAVATDTILNQKGQNVVCVYVAIGQKASSVAQVVTTFQERGAMEYTIVVAETADSPATLQYLAPYTGAALAEYFMYRERHTSIIYDDLSKQAQAYRQMSLLLRRPPGREAYPGDVFYLHSRLLERAAKLSSPLGEGSMTALPIVETQSGDVSAYIPTNVISITDGQIFLSADLFNAGIRPAINVGISVSRVGSAAQIKAMKQVAGKSKLELAQFAELEAFAQFASDLDKATQNQLARGQRLRELLKQSQAAPLTVEEQIVTIYTGANGYLDPLEIGQVKKFLVQLRTYLKTNKPQLQEIISSTKTFTEEVEALLKEAIPEQIELFLLQEQT.

ATP is bound at residue 170 to 177 (GDRQTGKA).

This sequence belongs to the ATPase alpha/beta chains family. In terms of assembly, F-type ATPases have 2 components, CF(1) - the catalytic core - and CF(0) - the membrane proton channel. CF(1) has five subunits: alpha(3), beta(3), gamma(1), delta(1), epsilon(1). CF(0) has four main subunits: a, b, b' and c.

The protein resides in the plastid. Its subcellular location is the chloroplast thylakoid membrane. The catalysed reaction is ATP + H2O + 4 H(+)(in) = ADP + phosphate + 5 H(+)(out). Produces ATP from ADP in the presence of a proton gradient across the membrane. The alpha chain is a regulatory subunit. The protein is ATP synthase subunit alpha, chloroplastic of Calycanthus floridus var. glaucus (Eastern sweetshrub).